Here is a 444-residue protein sequence, read N- to C-terminus: Proline--tRNA ligase (444 aa).

The protein belongs to the class-II aminoacyl-tRNA synthetase family. ProS type 2 subfamily. In terms of assembly, homodimer.

The protein resides in the cytoplasm. The catalysed reaction is tRNA(Pro) + L-proline + ATP = L-prolyl-tRNA(Pro) + AMP + diphosphate. Functionally, catalyzes the attachment of proline to tRNA(Pro) in a two-step reaction: proline is first activated by ATP to form Pro-AMP and then transferred to the acceptor end of tRNA(Pro). The chain is Proline--tRNA ligase from Maricaulis maris (strain MCS10) (Caulobacter maris).